A 4043-amino-acid chain; its full sequence is MGSQNLEPIAIVGSACRFPGGVNSPSALWKLLEDPKDVCTDIPSDRFDTTGFYHPDGKHHGATNVRKSYLLQEDLRLFDTAFFNISPNEADSMDPQQRILLETVYEALEAGGHTMESLRGSDTAVFTGTMGVDYNDTGIRDLNTVPTYFATGVNRAIISNRVSYFFDWHGPSMTIDTACSSSLIAVHQAVKALRTDESRVALACGTQVILNPEMYVIESKLKMLSPTGRSRMWDADADGYARGEGMAAIVLKRLSDAIADGDHIECLIRHTGSNQDGYSNGITVPSTEAQAALIRQTYAQAGLDPERCAEDSPQFFEAHGTGTKAGDPKEAAAIYHSFGRHKSAGDTPLYVGSIKTVIGHLEGSAGLAGLLKASGSIQNGVIAPNLLFQRLNPDIEPFYKGLQVPTKVIPWPQLPAGVPRRASVNSFGFGGSNAHAILEEYRGPSGQSEGTSGSQDGAIFTPFVFSAFSESSLVAQLRATADYLRTQQEKVNAKDLAWTLQSRRSQFPTKLALSALNIEELVSKIDAKLAPLAQNPNIAIGTKASSKAASAGPKILGVFTGQGAQWASMGAELIRSSAFVAKRIDELEQSLAALPASDRPQWSLKAEIMANSDTSRIGEAALSQPLCTAIQVVLVDLLQSAGISFSAVVGHSSGEIAAAYAAGFFSANDAVRIAYYRGLHARLAGNASTGQSGAMIAVGTSWEDAQDLISLRAFKGRLAVAAHNSAASVTLSGDADAVAHAKRVFDDEKKFARVLKVDTAYHSHHMLPCGDPYISSLQSCVIQINKTRKDNSCAWFSSVTPSSQGMEPIDALKDTYWRDNMTNAVLFADAVKNAVASDEQLSLVLEVGPHPALKGPATQNIADVRPSPIPYSGVLSRGANDVNAFSDALGFVWTHFGSQHVDFQSYTKLVSDGERQPKLVVGLPSYQWNHARLHWNESRRSKRLRGRKQATHEILGTILPESTPQDLRWSNILKVSEMPWMEGHQLQGQTVFPAAGYIAMALEASKFLAADKEVKVFEVNDLAIPRAVTFEEGDTSGVETLVTLTDIRQHQNKYLAANFSCYSLPVLSSGSEQEMDLIATATVKIILGTPSVESLMAPPAEDYNLFPIDADRFYTTLEGLGYGYSGPFKAFSSMQRRLDYATGQVATYVYSEDDTSPYLFHPSTLDVAFHAAMLAYSSPGDERLWSLHVPTGIRSVRVNPALCSLLPATGTRLPVRASIDGTSTSFSGYVDLLSEDGEYSAVQIEDLSIKTFAPATQADDRVLFTHTKLDIAGPDGAAVAEGVRPTALEKELAHACERMAYFYVRKWNSELSDDEWANGQPHYKYLHDWVKRTLDLAKKGQHPTLQRKWANDTAEEINALMDQYPDNLDVKMIRTVGEKIPPAVRNETTILEHLLQDNMLDDFYKLGSGFQRYNQFLASMMKQITHRYPHTKILEIGAGTGGATKYLLKAMGDKMASYTYTDISLGFFGKAAEIFKEYSDKMTFKVLDVEKSPAAQGYEQHSYDIVIASNVLHATESLHTTLVNTRKLLKPGGYLLLLEITNNNPIRTGLIWGTFAGWWLGVEDGRRWAPTISPGQWHSALRKAGFAGVDAVTPEIDTVAWPFSIMASQAVDDRVTFLRQPLSSLSPPIHIESLVILGNQSLQTARLAEELADNLRRFCGELTILDSLPTDEESLDLAPQSTFINLVDIDSPIFKDITSEGMGGLQRMFELAKHVLWITSGALIEEPYHMSSITFSRVVRRESGHINLAHLDVSDLQQSDVPKAISKHLLQLVALDEWETPAIGADGQEDQQRILWSKESEAFLENGTLLLPRLVNNVEQNARLNSARRTIYKEVPIRSPTVTLIPPSATSPPSLAEPTSLVPRRSDNLLWVDSSSLMALNVASDSYLFLAVSKEDATGRPLLLLSTTNSVAMAPVATLEAPMDAKTYVKNPSESSSRLLVTAASEILASSLIDRLSPGSSVLVHCSNKDRFLAAALSRRASPAAVMFTFTFDADDKSGTENSAWVPLSGRASNYGIRKAMPSAKPTHFLDLTAGTGLGLRISQLLPPTCHHIEISSLVRNESTVASSCDPDTLTNHLRETCLGDELTSALASEQRELKDLIIAADHLDTSATYHATSAVFWPSTGLVKVGVSSIDSTGLFSRDKTYLLVGLTGKIGQSIAKWLVANGAGCVCLMSRNPNIEPAWIESFQGTGGDVKIYSMDSTDITSVETVMNEIRTTCPPIGGVAHGSMVLHDSLFSKMTVEDMQTVLAPKIDGAIYLDQLFYDDDLDFFVLFSSAACVVGNLGQANYAAANGYLNSLSRQRRRRGVAGSTFDIGQVAGVGYIESAGQIVMDQLSALGLQRLSEADLQQVFAETIRAGRPDPKDAETTPFAVVTSGIRNFSEDENIKGPWFTNPFFSHCVIDAKVAELESDSSDKKSNIPAARQLVKATSLEQALDILKECFATKLRVILQLGSQDIDYDAPLVELGIDSLVAVEVRSWFLKEVRVDIPVLKVVGGASLAELCDRVVDKLPEELLVSVGKQGESQPPASTAQPQPVAPKPKPLPVPSFVVDSNGPPSEVSVSPAGTPLLSAGPASYSATEASTRSGSPSEATRLSQKVSSKLQSYFPPPPEPAVERKRPAKRFIKSVPISLGQSRFWFLQQLLDDQRTHNVAYYYHIKGNLDVGDMERAVRLVASRHEALRTCFVQDETDASQAYQKVLPSSPVRLICKKIDSEDDVASEYQRLRAHDLDMASGELLKLVLLTLSPSSHFLLMYHHHIIMDGISLQVFLSDLEKAYKGESLGPAPKQYPDFSKAQRQAFENGEMKKELAFWRRIFPDGEQPPVLPLLPMARTNARVPMAKFDTHQVQARVDAALAAKVRTVAKQQRSTPFHLYLAAFKALLFCFTDVDELTIGVADGARHDSSLMGSIGFFLNLLTLRFRRQPNQPFTEAIAEARKISHAALENSRVPFDVLLSELNVARSSTYSPFFQAFIDYRQGHQEEQTWGNCQMRMSEEVHTGKTAYDITVDVTETDAAAFIFFRGQKSIYDQEATQLLCDTYVHFLEVLTKEPSLAMSAIPRFSEKQLAEAIQVGRGPKLVSDWPETLPLRIDQVARENPDKVALMDGTGKALTYASMINRIHSIAEALQEAGVGPGLRVLVFQQATSDWPCSMLAIMRLGAIYVPLDLRNPLPRLAAVAQDCEPTAILADASTLDEASQLGVPSARLIDVSLVKTNPSKEVSNDSRAHSTAAILYTSGSTGTPKGIMVTHEGLRNEIEGYTKTWKLGPERVLQQSAFTFNHSSDQIYTGLVNGGMVYVVPWDKRGNALEITKIIQEQGITYTKATPSEYSLWMLYGRESLRLATSWRCAFGGGESLTTTVTQQFADLDLPQLHFFNSYGPTEISISSTKMEIPYRDREALERVGRIPCGYSLPGYYMYAVDEELRPLPAGMPGQLCIGGTGVSLGYLKNQELTDKHFLPNPFATEEDIANGWTRMYLTGDIGHMNQDGTMVFHSRMAGDTQVKIRGLRIELSDIESNIVAASQGALREAVVTLREGDPEFLVAHVVFVPECTIADKETFLQQLLHNLPVPQYMIPVVAIPIDELPLTNHSKVDRKAVKSLPLPHRVDRPDTSDDTELTETMIQLKGLWRGVLGKAIDQLGFDITPFTSFFLVGGNSLLIIRLQSEIRKRFRAAVPLVELLGANTLGEMAQKVEETISVKTIDWEYDTRPPTISASAIASAIASVPIDRARKGSTIVITGATGFLSKHLLPMLDARTDVDVIHCLAVRDIERAYSSPKVIHHSGDLSSPLLGLSNDEFNELSGTADAILHMGAARSFWDSYHVLRPINVAPTSDLVKLAAPRRVPIHYISTASLFGGTTATLDGSAVSAAAYPPPTDGSSGYAATRWASERILERSAADLGVPSSIYRLCPATTRQDAPQALLDEFTHYGSIIRATPDLSGWSGRLDMLPAVLTAQWLCEALLNYEERSGIVQFRNYESLLTVTGAELTASFDQEQSGSGNLEKISLLKWIGKIKKAGFPYFLASHEIAIEKEGSVNDTKLEMRR.

Positions 6–440 (LEPIAIVGSA…GSNAHAILEE (435 aa)) constitute a Ketosynthase family 3 (KS3) domain. Catalysis depends on for beta-ketoacyl synthase activity residues cysteine 179, histidine 319, and histidine 360. Residues 558 to 894 (VFTGQGAQWA…FSDALGFVWT (337 aa)) are malonyl-CoA:ACP transacylase (MAT) domain. An N-terminal hotdog fold region spans residues 952–1090 (HEILGTILPE…ATVKIILGTP (139 aa)). The interval 952-1256 (HEILGTILPE…LSIKTFAPAT (305 aa)) is dehydratase (DH) domain. The region spanning 952-1258 (HEILGTILPE…IKTFAPATQA (307 aa)) is the PKS/mFAS DH domain. Histidine 984 (proton acceptor; for dehydratase activity) is an active-site residue. Residues 1105 to 1258 (LFPIDADRFY…IKTFAPATQA (154 aa)) are C-terminal hotdog fold. Aspartate 1166 serves as the catalytic Proton donor; for dehydratase activity. Positions 1417-1591 (LASMMKQITH…RKAGFAGVDA (175 aa)) are methyltransferase (MT) domain. Residues 2146 to 2320 (TYLLVGLTGK…GSTFDIGQVA (175 aa)) are ketoreductase (KR) domain. In terms of domain architecture, Carrier 1 spans 2434–2512 (EQALDILKEC…ELCDRVVDKL (79 aa)). Residue serine 2472 is modified to O-(pantetheine 4'-phosphoryl)serine. Residues 2521 to 2618 (GKQGESQPPA…PPPPEPAVER (98 aa)) form a disordered region. Over residues 2527–2536 (QPPASTAQPQ) the composition is skewed to low complexity. A compositionally biased stretch (pro residues) spans 2537–2547 (PVAPKPKPLPV). Residues 2578–2605 (YSATEASTRSGSPSEATRLSQKVSSKLQ) are compositionally biased toward polar residues. Residues 2626–3067 (IKSVPISLGQ…IPRFSEKQLA (442 aa)) are condensation (C) domain. The segment at 3092 to 3496 (QVARENPDKV…GTMVFHSRMA (405 aa)) is adenylation (A) domain. Residues 3614–3695 (TELTETMIQL…EMAQKVEETI (82 aa)) enclose the Carrier 2 domain. Serine 3655 carries the post-translational modification O-(pantetheine 4'-phosphoryl)serine. The tract at residues 3736–3954 (ITGATGFLSK…DMLPAVLTAQ (219 aa)) is reductase (R) domain.

In the C-terminal section; belongs to the NRP synthetase family.

The catalysed reaction is malate + 6 malonyl-CoA + acetyl-CoA + 2 AH2 + 2 S-adenosyl-L-methionine + 5 NADPH + 9 H(+) = trihazone A + 2 A + 2 S-adenosyl-L-homocysteine + 6 CO2 + 5 NADP(+) + 7 CoA + 6 H2O. The protein operates within secondary metabolite biosynthesis. Functionally, hybrid PKS-NRPS synthetase; part of the gene cluster that produces the tetronate natural products trihazones. The PKS-NRPS synthetase thnA with the help of the trans-enoyl reductase thnE are responsible for the synthesis of the carboxylmethyl containing trihazone A. The PKS portion of thnA synthesizes beta-keto-triene chain from one acetyl-CoA and 6 equivalents of malonyl-CoA, in collaboration with thnE, which selectively reduces the enoyl intermediate during the first and fourth iteration of the PKS. The NRPS domain selects and activates malate, of which the alpha-hydroxyl group attacks the completed polyketide acyl-S-ACP chain to form the ester product. Intramolecular Dieckmann cyclization catalyzed by the terminal reductase domain releases the product as trihazone A from the PKS-NPRS. The pathway begins with the formation of trihazone A by the hybrid PKS-NRPS synthetase thnA and the trans-enoyl reductase thnE. Trihazone A is further decarboxylated by the 2-oxoglutarate-dependent dioxygenase thnC to produce trihazone D. The function of the FAD-dependent monooxygenase thnD has still to be identified. The polypeptide is Hybrid PKS-NRPS synthetase thnA (Trichoderma harzianum (Hypocrea lixii)).